The chain runs to 223 residues: Pleckstrin homology domain-containing family B member 1 (223 aa).

Residues 2 to 109 enclose the PH domain; sequence ALVRGGWLWR…WKTALMEANS (108 aa).

As to quaternary structure, homodimer. Interacts (via PH domain) with MYO1C. Interacts (via PH domain) with MYO7A. Binds transducins. As to expression, highly expressed in photoreceptor cells, oligodendrocytes and throughout the myelinated parts of the central nervous system. Detected in brain, liver, kidney, spleen and trachea.

It localises to the membrane. The protein localises to the cytoplasm. This chain is Pleckstrin homology domain-containing family B member 1 (Plekhb1), found in Rattus norvegicus (Rat).